We begin with the raw amino-acid sequence, 253 residues long: 5-oxoprolinase subunit A (253 aa).

Belongs to the LamB/PxpA family. Forms a complex composed of PxpA, PxpB and PxpC.

The catalysed reaction is 5-oxo-L-proline + ATP + 2 H2O = L-glutamate + ADP + phosphate + H(+). Functionally, catalyzes the cleavage of 5-oxoproline to form L-glutamate coupled to the hydrolysis of ATP to ADP and inorganic phosphate. This is 5-oxoprolinase subunit A from Bacillus anthracis (strain A0248).